The chain runs to 452 residues: Digeranylgeranylglycerophospholipid reductase (452 aa).

FAD is bound by residues phenylalanine 15–alanine 16, aspartate 35–serine 36, and lysine 45–alanine 50. Residue histidine 55 coordinates a 2,3-bis-O-phytanyl-sn-glycerol 1-phospholipid. The FAD site is built by alanine 122 and aspartate 288. Residue histidine 297 coordinates a 2,3-bis-O-phytanyl-sn-glycerol 1-phospholipid. Glycine 300–lysine 301 is an FAD binding site. Cysteines 310 and 335 form a disulfide. Tyrosine 340 contributes to the a 2,3-bis-O-phytanyl-sn-glycerol 1-phospholipid binding site.

It belongs to the geranylgeranyl reductase family. Monomer. FAD serves as cofactor.

It catalyses the reaction a 2,3-bis-O-phytanyl-sn-glycerol 1-phospholipid + 8 A = a 2,3-bis-O-(geranylgeranyl)-sn-glycerol 1-phospholipid + 8 AH2. The enzyme catalyses 2,3-bis-O-(phytanyl)-sn-glycerol 1-phosphate + 8 A = 2,3-bis-O-(geranylgeranyl)-sn-glycerol 1-phosphate + 8 AH2. It carries out the reaction sn-3-O-phytanylglycerol 1-phosphate + 4 A = sn-3-O-(geranylgeranyl)glycerol 1-phosphate + 4 AH2. The catalysed reaction is phytyl diphosphate + 3 A = (2E,6E,10E)-geranylgeranyl diphosphate + 3 AH2. It functions in the pathway membrane lipid metabolism; glycerophospholipid metabolism. Is involved in the reduction of 2,3-digeranylgeranylglycerophospholipids (unsaturated archaeols) into 2,3-diphytanylglycerophospholipids (saturated archaeols) in the biosynthesis of archaeal membrane lipids. Catalyzes the formation of archaetidic acid (2,3-di-O-phytanyl-sn-glyceryl phosphate) from 2,3-di-O-geranylgeranylglyceryl phosphate (DGGGP) via the hydrogenation of each double bond of the isoprenoid chains. Is not active with NADPH or NADH as an electron donor; the physiological reducing agent is unknown. Is also active on the more upstream precursors of membrane lipid biosynthesis, catalyzing the complete reduction of 3-O-geranylgeranylglyceryl phosphate (GGGP) to 3-O-phytanylglyceryl phosphate, and the partial reduction of geranylgeranyl diphosphate (GGPP) to phytyl diphosphate, thus reducing three of four GGPP double bonds and preserving the allylic double bond (at position 2). This reaction product is a reactive prenyl donor, which can be used as a substrate by archaeal prenyltransferases such as GGGP synthases. This chain is Digeranylgeranylglycerophospholipid reductase, found in Sulfolobus acidocaldarius (strain ATCC 33909 / DSM 639 / JCM 8929 / NBRC 15157 / NCIMB 11770).